Consider the following 385-residue polypeptide: MGILGLSKLIADLAPQAIRESEMKHFFGRKVAIDASMCLYQFLIAVRSEGAQLATVNGDPTSHLMGMFYRTIRLLDNGIKPVYVFDGKPPDLKSGELAKRAERREEAEKALKAATDAGDDAGIEKFNRRLVRVTKEHAKEAKELLTLMGVPYVDAPCEAEAQCAALVKAGKVYATATEDMDALTFGSTKLLRYLTYSEARKMPVKEFSYDKLLEGLAINNREFIDLCILLGCDYCESIKGIGPKRAIELINTYRDIETILDNLDSSKYTVPENWNYKVARELFIEPEVANADSIDLKWVEPDEEGLVKFLCGDRQFNEERVRNGAKKLMKSKQAQTQVRLDSFFKTLPSTPNATNAAKRKAEEAKKSANNKKAKTSGGGRGRRPK.

Residues 1-104 (MGILGLSKLI…GELAKRAERR (104 aa)) are N-domain. Residue aspartate 34 coordinates Mg(2+). DNA is bound by residues arginine 47 and arginine 70. Aspartate 86, glutamate 158, glutamate 160, aspartate 179, and aspartate 181 together coordinate Mg(2+). Residues 122 to 253 (GIEKFNRRLV…KRAIELINTY (132 aa)) are I-domain. Glutamate 158 serves as a coordination point for DNA. Glycine 231 and aspartate 233 together coordinate DNA. Mg(2+) is bound at residue aspartate 233. Residues 336–344 (TQVRLDSFF) are interaction with PCNA. The segment at 346 to 385 (TLPSTPNATNAAKRKAEEAKKSANNKKAKTSGGGRGRRPK) is disordered. Basic residues predominate over residues 368–385 (ANNKKAKTSGGGRGRRPK).

Belongs to the XPG/RAD2 endonuclease family. FEN1 subfamily. As to quaternary structure, interacts with PCNA. Three molecules of FEN1 bind to one PCNA trimer with each molecule binding to one PCNA monomer. PCNA stimulates the nuclease activity without altering cleavage specificity. The cofactor is Mg(2+). Phosphorylated. Phosphorylation upon DNA damage induces relocalization to the nuclear plasma.

It is found in the nucleus. Its subcellular location is the nucleolus. The protein localises to the nucleoplasm. The protein resides in the mitochondrion. Its function is as follows. Structure-specific nuclease with 5'-flap endonuclease and 5'-3' exonuclease activities involved in DNA replication and repair. During DNA replication, cleaves the 5'-overhanging flap structure that is generated by displacement synthesis when DNA polymerase encounters the 5'-end of a downstream Okazaki fragment. It enters the flap from the 5'-end and then tracks to cleave the flap base, leaving a nick for ligation. Also involved in the long patch base excision repair (LP-BER) pathway, by cleaving within the apurinic/apyrimidinic (AP) site-terminated flap. Acts as a genome stabilization factor that prevents flaps from equilibrating into structures that lead to duplications and deletions. Also possesses 5'-3' exonuclease activity on nicked or gapped double-stranded DNA, and exhibits RNase H activity. Also involved in replication and repair of rDNA and in repairing mitochondrial DNA. This chain is Flap endonuclease 1, found in Drosophila simulans (Fruit fly).